Reading from the N-terminus, the 371-residue chain is Homoserine O-acetyltransferase (371 aa).

The region spanning 44 to 350 (NAILVEHAWT…SYGHDAFLLE (307 aa)) is the AB hydrolase-1 domain. S150 serves as the catalytic Nucleophile. R217 lines the substrate pocket. Active-site residues include D311 and H344. A substrate-binding site is contributed by D345.

The protein belongs to the AB hydrolase superfamily. MetX family. As to quaternary structure, homodimer.

The protein localises to the cytoplasm. The enzyme catalyses L-homoserine + acetyl-CoA = O-acetyl-L-homoserine + CoA. The protein operates within amino-acid biosynthesis; L-methionine biosynthesis via de novo pathway; O-acetyl-L-homoserine from L-homoserine: step 1/1. Functionally, transfers an acetyl group from acetyl-CoA to L-homoserine, forming acetyl-L-homoserine. This Pelobacter propionicus (strain DSM 2379 / NBRC 103807 / OttBd1) protein is Homoserine O-acetyltransferase.